A 522-amino-acid polypeptide reads, in one-letter code: Cytochrome P450 4e5, mitochondrial (522 aa).

The heme site is built by Glu-307 and Cys-443.

It belongs to the cytochrome P450 family. Heme is required as a cofactor.

It localises to the mitochondrion. In terms of biological role, probably involved in steroid hormones biosynthesis. The protein is Cytochrome P450 4e5, mitochondrial (Cyp4e5) of Drosophila mettleri (Fruit fly).